Consider the following 384-residue polypeptide: Cell adhesion molecule CEACAM18 (384 aa).

A signal peptide spans 1–30; sequence MDLSRPRWSLWRRVFLMASLLACGICQASG. N-linked (GlcNAc...) asparagine glycosylation is found at Asn-108, Asn-112, Asn-121, Asn-162, and Asn-270. The Ig-like C2-type domain occupies 227–314; sequence PDYVLLRSNP…LIMYMDVRIQ (88 aa). An intrachain disulfide couples Cys-255 to Cys-296. The interval 358-384 is disordered; the sequence is QPLLNQDKSGSMSVHPRPEDKTRRASR. Residues 359 to 369 show a composition bias toward polar residues; that stretch reads PLLNQDKSGSM. Residues 373–384 are compositionally biased toward basic and acidic residues; the sequence is PRPEDKTRRASR.

This sequence belongs to the immunoglobulin superfamily. CEA family.

In Homo sapiens (Human), this protein is Cell adhesion molecule CEACAM18.